Consider the following 356-residue polypeptide: Histidinol-phosphate aminotransferase 2 (356 aa).

At Lys-214 the chain carries N6-(pyridoxal phosphate)lysine.

The protein belongs to the class-II pyridoxal-phosphate-dependent aminotransferase family. Histidinol-phosphate aminotransferase subfamily. As to quaternary structure, homodimer. The cofactor is pyridoxal 5'-phosphate.

The enzyme catalyses L-histidinol phosphate + 2-oxoglutarate = 3-(imidazol-4-yl)-2-oxopropyl phosphate + L-glutamate. The protein operates within amino-acid biosynthesis; L-histidine biosynthesis; L-histidine from 5-phospho-alpha-D-ribose 1-diphosphate: step 7/9. The polypeptide is Histidinol-phosphate aminotransferase 2 (Dechloromonas aromatica (strain RCB)).